We begin with the raw amino-acid sequence, 223 residues long: UPF0441 protein ETA_04310 (223 aa).

Positions 166–223 are disordered; it reads YGAATPGRTMTVPKSALAPKPATTSTVTRGGFGESVAKQNTMQRNSSSTGSANRSMGG. A compositionally biased stretch (polar residues) spans 202–223; it reads AKQNTMQRNSSSTGSANRSMGG.

Belongs to the UPF0441 family.

The sequence is that of UPF0441 protein ETA_04310 from Erwinia tasmaniensis (strain DSM 17950 / CFBP 7177 / CIP 109463 / NCPPB 4357 / Et1/99).